We begin with the raw amino-acid sequence, 436 residues long: Gamma-glutamyl phosphate reductase (436 aa).

Belongs to the gamma-glutamyl phosphate reductase family.

The protein resides in the cytoplasm. The catalysed reaction is L-glutamate 5-semialdehyde + phosphate + NADP(+) = L-glutamyl 5-phosphate + NADPH + H(+). It functions in the pathway amino-acid biosynthesis; L-proline biosynthesis; L-glutamate 5-semialdehyde from L-glutamate: step 2/2. In terms of biological role, catalyzes the NADPH-dependent reduction of L-glutamate 5-phosphate into L-glutamate 5-semialdehyde and phosphate. The product spontaneously undergoes cyclization to form 1-pyrroline-5-carboxylate. The chain is Gamma-glutamyl phosphate reductase from Prochlorococcus marinus subsp. pastoris (strain CCMP1986 / NIES-2087 / MED4).